A 463-amino-acid polypeptide reads, in one-letter code: MSNVVTRFAPSPTGHLHIGGARTAIFNWLLARHFGGRFVLRIEDTDTERSKQEYTDSILASMKWLGLDWDGDLIYQSERFDIYNSYIDRLLESGHAYWCECPPDEVEKMREEARAKGLKPRYNGRCRSRDLGPGDGRVVRLKAPAEGRIVFDDLVKGTVAFDVAELDDMVLRRSDGAPTYNLAVVVDDATMGVTHVLRGDDHLSNTPKQILLYQALGFDLPRFGHVPMILGPDRKKLSKRHGAKAVIEYEQYGLLPQALVNYLVRLGWSHGDQEIFALEELVEKFGTENLNSSAAGFDPDKLEWLNGHYLRETSPEELARLVLPFVAAEGFDVDASRLAQLVPLFRERANNLVELARVMRFMLVPAAEVEYDAAAVAKALTEEGRRHVAGVREALAVLGIFDREGCEKAIHDYVEGNGLKFKQVAPAVRVAVVGAMGGPGLPDMMALLGRDDVLARLDRAVAL.

The 'HIGH' region motif lies at 10 to 20; the sequence is PSPTGHLHIGG. The short motif at 236–240 is the 'KMSKS' region element; it reads KLSKR. Position 239 (K239) interacts with ATP.

The protein belongs to the class-I aminoacyl-tRNA synthetase family. Glutamate--tRNA ligase type 1 subfamily. As to quaternary structure, monomer.

It localises to the cytoplasm. It catalyses the reaction tRNA(Glu) + L-glutamate + ATP = L-glutamyl-tRNA(Glu) + AMP + diphosphate. Its function is as follows. Catalyzes the attachment of glutamate to tRNA(Glu) in a two-step reaction: glutamate is first activated by ATP to form Glu-AMP and then transferred to the acceptor end of tRNA(Glu). In Nitratidesulfovibrio vulgaris (strain DP4) (Desulfovibrio vulgaris), this protein is Glutamate--tRNA ligase.